The sequence spans 285 residues: Meiotically up-regulated gene 74 protein (285 aa).

It localises to the cytoplasm. In terms of biological role, has a role in meiosis. The polypeptide is Meiotically up-regulated gene 74 protein (mug74) (Schizosaccharomyces pombe (strain 972 / ATCC 24843) (Fission yeast)).